The following is a 396-amino-acid chain: NADH-quinone oxidoreductase subunit D (396 aa).

Belongs to the complex I 49 kDa subunit family. In terms of assembly, NDH-1 is composed of 14 different subunits. Subunits NuoB, C, D, E, F, and G constitute the peripheral sector of the complex.

The protein resides in the cell inner membrane. It catalyses the reaction a quinone + NADH + 5 H(+)(in) = a quinol + NAD(+) + 4 H(+)(out). In terms of biological role, NDH-1 shuttles electrons from NADH, via FMN and iron-sulfur (Fe-S) centers, to quinones in the respiratory chain. The immediate electron acceptor for the enzyme in this species is believed to be ubiquinone. Couples the redox reaction to proton translocation (for every two electrons transferred, four hydrogen ions are translocated across the cytoplasmic membrane), and thus conserves the redox energy in a proton gradient. The polypeptide is NADH-quinone oxidoreductase subunit D (Orientia tsutsugamushi (strain Ikeda) (Rickettsia tsutsugamushi)).